The chain runs to 170 residues: Cathelicidin antimicrobial peptide (170 aa).

The signal sequence occupies residues 1–30; it reads MKTQRDGPSLGRWSLLLLLLGLTMPLAVIG. Positions 31–131 are cleaved as a propeptide — cathelin-like domain (CLD); that stretch reads RVLSYQEAVL…DISCDKDKRK (101 aa). Residues 31-131 form a cathelin-like domain (CLD) region; the sequence is RVLSYQEAVL…DISCDKDKRK (101 aa). 2 disulfide bridges follow: Cys-86/Cys-97 and Cys-108/Cys-125. The active core stretch occupies residues 150–162; the sequence is LKKIGQKIKDFFG.

Belongs to the cathelicidin family. As to quaternary structure, monomer, homodimer or homotrimer (in vitro). Oligomerizes as tetra- or hexamer in solution (in vitro). In terms of processing, proteolytically cleaved by proteinase PRTN3 into antibacterial peptide LL-37. Proteolytically cleaved by cathepsin CTSG and neutrophil elastase ELANE. Post-translationally, resistant to proteolytic degradation in solution, and when bound to both zwitterionic (mimicking mammalian membranes) and negatively charged membranes (mimicking bacterial membranes). After secretion onto the skin surface, the CAMP gene product is processed by a serine protease-dependent mechanism into multiple novel antimicrobial peptides distinct from and shorter than cathelicidin LL-37. These peptides show enhanced antimicrobial action, acquiring the ability to kill skin pathogens such as S.aureus, E.coli and C.albicans. These peptides have lost the ability to stimulate CXCL8/IL8 release from keratinocytes. The peptides act synergistically, killing bacteria at lower concentrations when present together, and maintain activity at increased salt condition.

Its subcellular location is the secreted. It is found in the vesicle. Its function is as follows. Antimicrobial protein that is an integral component of the innate immune system. Binds to bacterial lipopolysaccharides (LPS). Acts via neutrophil N-formyl peptide receptors to enhance the release of CXCL2. Postsecretory processing generates multiple cathelicidin antimicrobial peptides with various lengths which act as a topical antimicrobial defense in sweat on skin. The unprocessed precursor form, cathelicidin antimicrobial peptide, inhibits the growth of Gram-negative E.coli and E.aerogenes with efficiencies comparable to that of the mature peptide LL-37 (in vitro). In terms of biological role, antimicrobial peptide that is an integral component of the innate immune system. Binds to bacterial lipopolysaccharides (LPS). Causes membrane permeabilization by forming transmembrane pores (in vitro). Causes lysis of E.coli. Exhibits antimicrobial activity against Gram-negative bacteria such as P.aeruginosa, S.typhimurium, E.aerogenes, E.coli and P.syringae, Gram-positive bacteria such as L.monocytogenes, S.epidermidis, S.pyogenes and S.aureus, as well as vancomycin-resistant enterococci (in vitro). Exhibits antimicrobial activity against methicillin-resistant S.aureus, P.mirabilis, and C.albicans in low-salt media, but not in media containing 100 mM NaCl (in vitro). Forms chiral supramolecular assemblies with quinolone signal (PQS) molecules of P.aeruginosa, which may lead to interference of bacterial quorum signaling and perturbance of bacterial biofilm formation. May form supramolecular fiber-like assemblies on bacterial membranes. Induces cytokine and chemokine producation as well as TNF/TNFA and CSF2/GMCSF production in normal human keratinocytes. Exhibits hemolytic activity against red blood cells. Functionally, exhibits antimicrobial activity against E.coli and B.megaterium (in vitro). The chain is Cathelicidin antimicrobial peptide from Saguinus oedipus (Cotton-top tamarin).